Here is a 691-residue protein sequence, read N- to C-terminus: Menaquinone reductase, molybdopterin-binding-like subunit (691 aa).

Residues 1–27 (MALDRRGFLKFIGGATAGILATPVVWK) constitute a signal peptide (tat-type signal). A 4Fe-4S Mo/W bis-MGD-type domain is found at 50-106 (NSYVPTVSKLCPTGIGVRVRLVDGRPVRVIGNPEHPLSKGGVSSIAAAEVQMLYSPA).

This sequence belongs to the prokaryotic molybdopterin-containing oxidoreductase family. In terms of assembly, the Qrc complex is composed of four subunits: QrcA, QrcB, QrcC and QrcD. Can form a supercomplex with the [NiFe] hydrogenase HynA1 and the tetraheme Type I cytochrome c3 TpIc(3), its physiological electron donors. Requires There is no molybdenum or tungsten pterin cofactor present in the Qrc complex, despite the similarity of QrcB to molybdopterin-containing oxidoreductases. as cofactor. Post-translationally, predicted to be exported by the Tat system. The position of the signal peptide cleavage has not been experimentally proven.

Its subcellular location is the periplasm. Functionally, component of the respiratory Qrc complex, that catalyzes the reduction of the menaquinone pool using electrons transferred from the reduced periplasmic cytochrome c3, and which is probably involved in sulfate respiration. Is likely essential for growth on H(2) or formate since the periplasmic hydrogenases and/or formate dehydrogenases act as primary electron donors for the Qrc complex. The function of the QrcB subunit is unknown; in the absence of a catalytic site, it may provide a structural scaffold for the other subunits. The sequence is that of Menaquinone reductase, molybdopterin-binding-like subunit from Nitratidesulfovibrio vulgaris (strain ATCC 29579 / DSM 644 / CCUG 34227 / NCIMB 8303 / VKM B-1760 / Hildenborough) (Desulfovibrio vulgaris).